The primary structure comprises 285 residues: Ribosomal protein L11 methyltransferase (285 aa).

S-adenosyl-L-methionine-binding residues include T131, G154, D176, and N223.

It belongs to the methyltransferase superfamily. PrmA family.

It is found in the cytoplasm. It catalyses the reaction L-lysyl-[protein] + 3 S-adenosyl-L-methionine = N(6),N(6),N(6)-trimethyl-L-lysyl-[protein] + 3 S-adenosyl-L-homocysteine + 3 H(+). In terms of biological role, methylates ribosomal protein L11. This is Ribosomal protein L11 methyltransferase from Brucella melitensis biotype 2 (strain ATCC 23457).